Here is a 176-residue protein sequence, read N- to C-terminus: Flavodoxin 1 (176 aa).

Residues 4 to 165 (TGIFFGSDTG…RVEKWVKQVS (162 aa)) form the Flavodoxin-like domain.

The protein belongs to the flavodoxin family. FMN is required as a cofactor.

Low-potential electron donor to a number of redox enzymes (Potential). Involved in the reactivation of inactive cob(II)alamin in methionine synthase. The polypeptide is Flavodoxin 1 (fldA) (Salmonella typhimurium (strain LT2 / SGSC1412 / ATCC 700720)).